We begin with the raw amino-acid sequence, 496 residues long: L-arabinose isomerase (496 aa).

Residues Glu-306, Glu-331, His-348, and His-447 each coordinate Mn(2+).

It belongs to the arabinose isomerase family. Requires Mn(2+) as cofactor.

The catalysed reaction is beta-L-arabinopyranose = L-ribulose. Its pathway is carbohydrate degradation; L-arabinose degradation via L-ribulose; D-xylulose 5-phosphate from L-arabinose (bacterial route): step 1/3. In terms of biological role, catalyzes the conversion of L-arabinose to L-ribulose. The chain is L-arabinose isomerase from Geobacillus kaustophilus (strain HTA426).